The following is a 390-amino-acid chain: Ribonucleoside-diphosphate reductase subunit M2 (390 aa).

Serine 20 carries the phosphoserine modification. Threonine 33 bears the Phosphothreonine mark. Positions 49–51 (RRI) match the Cy motif. Residues aspartate 139, glutamate 170, and histidine 173 each coordinate Fe cation. Tyrosine 177 is an active-site residue. 3 residues coordinate Fe cation: glutamate 233, glutamate 267, and histidine 270.

Belongs to the ribonucleoside diphosphate reductase small chain family. As to quaternary structure, heterodimer of a large and a small subunit. Interacts (via Cy motif and when phosphorylated at Thr-33) with CCNF; the interaction occurs exclusively in G2 and early M. Fe cation is required as a cofactor. In terms of processing, phosphorylation on Ser-20 relieves the inhibitory effect on Wnt signaling. Phosphorylated on Thr-33 by CDK1 and CDK2; predominantly in G2 and M phase. Ubiquitinated by the SCF(CCNF) E3 ubiquitin-protein ligase complex; leading to its degradation by the proteasome.

It localises to the cytoplasm. The protein localises to the nucleus. The catalysed reaction is a 2'-deoxyribonucleoside 5'-diphosphate + [thioredoxin]-disulfide + H2O = a ribonucleoside 5'-diphosphate + [thioredoxin]-dithiol. In terms of biological role, provides the precursors necessary for DNA synthesis. Catalyzes the biosynthesis of deoxyribonucleotides from the corresponding ribonucleotides. Inhibits Wnt signaling. In Rattus norvegicus (Rat), this protein is Ribonucleoside-diphosphate reductase subunit M2 (Rrm2).